The following is a 139-amino-acid chain: Self-incompatibility protein S1 (139 aa).

Residues 1–19 (MNIFYVIVLLSFFLSKSSG) form the signal peptide. N-linked (GlcNAc...) asparagine glycosylation is present at Asn51.

The protein belongs to the plant self-incompatibility (S1) protein family. Glycosylated (S1b) and unglocosylated (S1a) forms coexist. Accumulates in the stigma (at protein level).

Its subcellular location is the secreted. Exhibits specific pollen self-inhibitory activity thus preventing self-fertilization. The sequence is that of Self-incompatibility protein S1 from Papaver rhoeas (Common poppy).